A 99-amino-acid chain; its full sequence is UPF0213 protein PC1_0597 (99 aa).

The 76-residue stretch at Pro-8–Arg-83 folds into the GIY-YIG domain.

The protein belongs to the UPF0213 family.

This Pectobacterium carotovorum subsp. carotovorum (strain PC1) protein is UPF0213 protein PC1_0597.